The sequence spans 116 residues: Small ribosomal subunit protein eS24 (116 aa).

Positions isoleucine 81–glutamate 116 are disordered. Residues glutamate 96–glutamate 116 are compositionally biased toward acidic residues.

The protein belongs to the eukaryotic ribosomal protein eS24 family.

The protein is Small ribosomal subunit protein eS24 of Methanopyrus kandleri (strain AV19 / DSM 6324 / JCM 9639 / NBRC 100938).